Reading from the N-terminus, the 245-residue chain is Short-chain dehydrogenase/reductase pyiH (245 aa).

4 residues coordinate NADP(+): isoleucine 18, arginine 42, aspartate 68, and asparagine 95. Serine 150 functions as the Proton donor in the catalytic mechanism.

This sequence belongs to the short-chain dehydrogenases/reductases (SDR) family.

Its pathway is mycotoxin biosynthesis. Short-chain dehydrogenase/reductase; part of the gene cluster that mediates the biosynthesis of the mycotoxin pyrichalasin H, a tyrosine-derived cytochalasan that inhibits the growth of rice seedlings, but also inhibits lymphocyte capping and actin polymerization and alters cell morphology. Pyrichalasin H is indicated as the responsible agent for the genus-specific pathogenicity of M.grisea toward crabgrass. The first step in the pathway is catalyzed by the O-methyltransferase pyiA which methylates free tyrosine to generate the precursor O-methyltyrosine. The hybrid PKS-NRPS pyiS, assisted by the enoyl reductase pyiC, are responsible for fusion of the O-methyltyrosine precursor and the polyketide backbone. The polyketide synthase module (PKS) of pyiS is responsible for the synthesis of the polyketide backbone and the downstream nonribosomal peptide synthetase (NRPS) amidates the carboxyl end of the polyketide with the O-methyltyrosine precursor. As the NRPS A-domain demonstrates substrate tolerance, pyiS can also use phenylalanine, tyrosine and even para-chlorophenylalanine as amino acid precursor, which leads to the production of novel cytochalasans, including halogenated cytochalasans. Because pyiS lacks a designated enoylreductase (ER) domain, the required activity is provided the enoyl reductase pyiC. Reduction by the hydrolyase pyiE leads to 1,5-dihydropyrrolone, which is substrate for dehydration and intra-molecular Diels-Alder cyclization by the Diels-Alderase pyiF to yield the required isoindolone-fused macrocycle. The tailoring cytochrome P450 monooxygenases piyD and piyG catalyze the hydroxylation at C-18 and C-7, respectivily, whereas the short-chain dehydrogenase/reductase pyiH reduces the carbonyl at C-21 in preparation for the transfer of an acetyl group by the acetyltransferase pyiB. These 3 reactions whose order is not clear yet, lead to the production of O-methylpyrichalasin J, a deacetylated pyrichalasin H. Finally, pyiB to converts O-methylpyrichalasin J into the final product pyrichalasin H via acetylation of C-21. This is Short-chain dehydrogenase/reductase pyiH from Pyricularia grisea (Crabgrass-specific blast fungus).